Here is a 696-residue protein sequence, read N- to C-terminus: DEAD-box ATP-dependent RNA helicase 7 (696 aa).

A disordered region spans residues 1–116 (MPSLPVAAAE…GDEDPADPNA (116 aa)). Positions 16–97 (ESASKKSKRK…KVVVEEEEED (82 aa)) form a coiled coil. A compositionally biased stretch (basic and acidic residues) spans 27–38 (KAAEVEVEASSR). A compositionally biased stretch (basic residues) spans 39–49 (KKEKKEKKRKA). Low complexity predominate over residues 67–77 (STSSDEPAPAA). Positions 92-112 (EEEEEDDDEGELTASGDEDPA) are enriched in acidic residues. The Q motif signature appears at 115-143 (NALANFRISESLREKLKSKGIKALFPIQA). The 183-residue stretch at 146 to 328 (FDLVLDGHDL…LRFLKSGKKT (183 aa)) folds into the Helicase ATP-binding domain. 159 to 166 (ARTGQGKT) serves as a coordination point for ATP. The short motif at 274-277 (DEAD) is the DEAD box element. One can recognise a Helicase C-terminal domain in the interval 357–500 (QVIPDIIRCY…ISAPQPTDVA (144 aa)). The tract at residues 641–696 (LPPLQEREQSGGSRGGGRFGNRRFSGGGGGRGGGGRGFGGGRGRGGGGGNRFNKRY) is disordered. A compositionally biased stretch (gly residues) spans 652–690 (GSRGGGRFGNRRFSGGGGGRGGGGRGFGGGRGRGGGGGN).

This sequence belongs to the DEAD box helicase family. DDX21/DDX50 subfamily.

It is found in the nucleus. The enzyme catalyses ATP + H2O = ADP + phosphate + H(+). The sequence is that of DEAD-box ATP-dependent RNA helicase 7 from Oryza sativa subsp. japonica (Rice).